The sequence spans 733 residues: Cell division cycle protein 48 homolog AF_1297 (733 aa).

Residues 223–230 (GPPGTGKT) and 496–503 (GPPGTGKT) each bind ATP.

Belongs to the AAA ATPase family. CDC48 subfamily.

This is Cell division cycle protein 48 homolog AF_1297 from Archaeoglobus fulgidus (strain ATCC 49558 / DSM 4304 / JCM 9628 / NBRC 100126 / VC-16).